Consider the following 250-residue polypeptide: Dimethyl sulfide dehydrogenase assembly chaperone protein (250 aa).

A disordered region spans residues 231–250 (SAEARSDSAPDAAAHQNLWG).

Belongs to the type II DMSO reductase enzyme chaperone family.

Its subcellular location is the cytoplasm. May function as a system-specific chaperone protein essential for the assembly of an active dimethyl sulfide dehydrogenase DdhABC. This is Dimethyl sulfide dehydrogenase assembly chaperone protein (ddhD) from Rhodovulum sulfidophilum (Rhodobacter sulfidophilus).